Consider the following 281-residue polypeptide: MKESLISFIKEKIEEYNYRGAVVGVSGGVDSAVVLSLCVQALGKDRVFALILPERDSSKDSLKDAVDFCERLGVEYRKRSITPILRKIGVYRLFPPRLFLPDSIVKRYVLNRWNTLSKDPFLDDLRNTGPEEFLKGLAYYRIKHRIRMCLLYFEAEKRGYAVVGTTNRTEYLTGLYVKWGDEAVDIEPIMHLYKTQVFELAKEMNVPEKILKKPPSPDLIPGITDEMAFNMSYLELDRILMKLEKNEDLSDEDPKKVERVKKILELSEKYRRDIPITFDRI.

24–31 (GVSGGVDS) lines the ATP pocket. Position 30 (Asp-30) interacts with Mg(2+). Arg-145 is a deamido-NAD(+) binding site. Residue Thr-165 coordinates ATP. Glu-170 serves as a coordination point for Mg(2+). Deamido-NAD(+) is bound by residues Lys-178 and Asp-185. 2 residues coordinate ATP: Lys-194 and Ser-216.

The protein belongs to the NAD synthetase family. Homodimer.

The catalysed reaction is deamido-NAD(+) + NH4(+) + ATP = AMP + diphosphate + NAD(+) + H(+). The protein operates within cofactor biosynthesis; NAD(+) biosynthesis; NAD(+) from deamido-NAD(+) (ammonia route): step 1/1. Its function is as follows. Catalyzes the ATP-dependent amidation of deamido-NAD to form NAD. Uses ammonia as a nitrogen source. This Thermotoga maritima (strain ATCC 43589 / DSM 3109 / JCM 10099 / NBRC 100826 / MSB8) protein is NH(3)-dependent NAD(+) synthetase (nadE1).